The following is an 802-amino-acid chain: Oleate activated transcription factor 3 (802 aa).

Positions 19–47 form a DNA-binding region, zn(2)-C6 fungal-type; the sequence is CTNCKKRKSKCDRGKPCSNCTRIGIENSC. Residues 749–768 show a composition bias toward polar residues; the sequence is TSQQDSLASAGTNRTNNIAT. The tract at residues 749–779 is disordered; the sequence is TSQQDSLASAGTNRTNNIATNSGSGDDGGNG.

Belongs to the OAF3 family.

The protein localises to the cytoplasm. It is found in the nucleus. It localises to the mitochondrion. Its function is as follows. Transcriptional inhibitor with a significantly increased number of target genes in response to oleate. This Vanderwaltozyma polyspora (strain ATCC 22028 / DSM 70294 / BCRC 21397 / CBS 2163 / NBRC 10782 / NRRL Y-8283 / UCD 57-17) (Kluyveromyces polysporus) protein is Oleate activated transcription factor 3 (OAF3).